The following is a 466-amino-acid chain: Alpha-1A adrenergic receptor (466 aa).

Residues 1–25 (MVFLSGNASDSSNCTHPPAPVNISK) lie on the Extracellular side of the membrane. Residues asparagine 7, asparagine 13, and asparagine 22 are each glycosylated (N-linked (GlcNAc...) asparagine). A helical transmembrane segment spans residues 26–51 (AILLGVILGGLILFGVLGNILVILSV). Residues 52-63 (ACHRHLHSVTHY) are Cytoplasmic-facing. Residues 64 to 89 (YIVNLAVADLLLTSTVLPFSAIFEIL) traverse the membrane as a helical segment. Residues 90–99 (GYWAFGRVFC) lie on the Extracellular side of the membrane. A helical transmembrane segment spans residues 100-122 (NIWAAVDVLCCTASIISLCVISI). The Cytoplasmic segment spans residues 123–143 (DRYIGVSYPLRYPTIVTQRRG). A helical membrane pass occupies residues 144–168 (LRALLCVWAFSLVISVGPLFGWRQP). Residues 169–181 (APDDETICQINEE) are Extracellular-facing. Residues 182–205 (PGYVLFSALGSFYVPLTIILAMYC) form a helical membrane-spanning segment. The Cytoplasmic segment spans residues 206–272 (RVYVVAKRES…KFSREKKAAK (67 aa)). The helical transmembrane segment at 273–297 (TLGIVVGCFVLCWLPFFLVMPIGSF) threads the bilayer. At 298–304 (FPDFKPP) the chain is on the extracellular side. A helical membrane pass occupies residues 305 to 329 (ETVFKIVFWLGYLNSCINPIIYPCS). At 330-466 (SQEFKKAFQN…ISLSENGEEV (137 aa)) the chain is on the cytoplasmic side. Positions 334-349 (KKAFQNVLKIQCLRRK) match the Nuclear localization signal motif. A lipid anchor (S-palmitoyl cysteine) is attached at cysteine 345.

The protein belongs to the G-protein coupled receptor 1 family. Adrenergic receptor subfamily. ADRA1A sub-subfamily. As to quaternary structure, homo- and heterooligomer. Heterooligomerizes with ADRA1B homooligomers in cardiac myocytes. Interacts with CAVIN4. As to expression, abundant in liver, vas deferens, brain, and aorta, but not in heart.

It localises to the nucleus membrane. It is found in the cell membrane. The protein resides in the cytoplasm. The protein localises to the membrane. Its subcellular location is the caveola. This alpha-adrenergic receptor mediates its action by association with G proteins that activate a phosphatidylinositol-calcium second messenger system. Its effect is mediated by G(q) and G(11) proteins. Nuclear ADRA1A-ADRA1B heterooligomers regulate phenylephrine (PE)-stimulated ERK signaling in cardiac myocytes. The chain is Alpha-1A adrenergic receptor (ADRA1A) from Oryctolagus cuniculus (Rabbit).